The sequence spans 995 residues: DNA polymerase (995 aa).

It belongs to the DNA polymerase type-B family.

It catalyses the reaction DNA(n) + a 2'-deoxyribonucleoside 5'-triphosphate = DNA(n+1) + diphosphate. This Kluyveromyces lactis (strain ATCC 8585 / CBS 2359 / DSM 70799 / NBRC 1267 / NRRL Y-1140 / WM37) (Yeast) protein is DNA polymerase (RF1).